Reading from the N-terminus, the 364-residue chain is Probable dual-specificity RNA methyltransferase RlmN (364 aa).

The active-site Proton acceptor is the Glu-107. The region spanning 113 to 346 (HEYGNSVCVT…ATIRREQGAD (234 aa)) is the Radical SAM core domain. Residues Cys-120 and Cys-351 are joined by a disulfide bond. [4Fe-4S] cluster-binding residues include Cys-127, Cys-131, and Cys-134. Residues 177–178 (GE), Ser-209, 232–234 (SLH), and Asn-308 contribute to the S-adenosyl-L-methionine site. Cys-351 serves as the catalytic S-methylcysteine intermediate.

The protein belongs to the radical SAM superfamily. RlmN family. [4Fe-4S] cluster serves as cofactor.

It is found in the cytoplasm. It catalyses the reaction adenosine(2503) in 23S rRNA + 2 reduced [2Fe-2S]-[ferredoxin] + 2 S-adenosyl-L-methionine = 2-methyladenosine(2503) in 23S rRNA + 5'-deoxyadenosine + L-methionine + 2 oxidized [2Fe-2S]-[ferredoxin] + S-adenosyl-L-homocysteine. The catalysed reaction is adenosine(37) in tRNA + 2 reduced [2Fe-2S]-[ferredoxin] + 2 S-adenosyl-L-methionine = 2-methyladenosine(37) in tRNA + 5'-deoxyadenosine + L-methionine + 2 oxidized [2Fe-2S]-[ferredoxin] + S-adenosyl-L-homocysteine. Specifically methylates position 2 of adenine 2503 in 23S rRNA and position 2 of adenine 37 in tRNAs. Confers resistance to some classes of antibiotics. This is Probable dual-specificity RNA methyltransferase RlmN from Staphylococcus saprophyticus subsp. saprophyticus (strain ATCC 15305 / DSM 20229 / NCIMB 8711 / NCTC 7292 / S-41).